The primary structure comprises 89 residues: Small ribosomal subunit protein bS20 (89 aa).

The interval 1–26 (MANIKASKKDALTSEKRRKKNSSRRS) is disordered. The segment covering 16–26 (KRRKKNSSRRS) has biased composition (basic residues).

It belongs to the bacterial ribosomal protein bS20 family.

Functionally, binds directly to 16S ribosomal RNA. This chain is Small ribosomal subunit protein bS20, found in Buchnera aphidicola subsp. Acyrthosiphon pisum (strain 5A).